The chain runs to 228 residues: MQTLEQLTSPEHSAWITLSQWIDNARNHCEVIKKDQSSAERELFTMQMPTSSPMGAVIYETGGILIHYGWLRILGSGSFKLPRGLMDWNFSKSFSESGEKPKYLLVADDVIGGYFALNGGSLGNNIGKIYYYSSKDLTWHNLNFTYTEFLAWVLNGDVEAFYQGLFWKNWQDDVKQLDGNQVFVFTPDLNQDRKIAIDERQKQEVNIETHYQANFAEKNKFDLAYSVA.

The protein to E.coli YbfG.

This is an uncharacterized protein from Haemophilus influenzae (strain ATCC 51907 / DSM 11121 / KW20 / Rd).